The chain runs to 361 residues: DNA replication and repair protein RecF (361 aa).

30 to 37 lines the ATP pocket; that stretch reads GANGSGKT.

It belongs to the RecF family.

Its subcellular location is the cytoplasm. The RecF protein is involved in DNA metabolism; it is required for DNA replication and normal SOS inducibility. RecF binds preferentially to single-stranded, linear DNA. It also seems to bind ATP. The protein is DNA replication and repair protein RecF of Glaesserella parasuis serovar 5 (strain SH0165) (Haemophilus parasuis).